Here is a 1367-residue protein sequence, read N- to C-terminus: Tonsoku-like protein (1367 aa).

9 TPR repeats span residues Ala27–Val60, Ala67–Leu100, Gln107–Lys147, Thr162–Asn195, Phe202–Met235, Ser242–Lys275, Met311–Leu344, Ala352–Asn385, and Ala390–Ala424. The disordered stretch occupies residues Ser460–Glu509. Residues Thr465–Glu509 are compositionally biased toward acidic residues. 3 ANK repeats span residues Met528–Pro557, Cys561–Asp590, and Asp597–Leu626. Disordered stretches follow at residues Met660–Pro714 and Ser726–Ser785. The segment covering Met666–Asn684 has biased composition (polar residues). Positions Thr692–Ser713 are enriched in pro residues. Over residues Lys772–Glu781 the composition is skewed to basic and acidic residues. Arg797 is modified (omega-N-methylarginine). 2 disordered regions span residues Gly798–Ala820 and Thr841–Lys910. Residues Thr844–Ser857 are compositionally biased toward low complexity. Residues Ala894–Asn909 show a composition bias toward polar residues. LRR repeat units lie at residues His1062–Thr1086, Met1090–Gln1118, Phe1121–Ser1144, Ala1181–Ser1205, Gly1240–Arg1263, Cys1268–Ala1293, and Leu1324–Gln1347.

Belongs to the Tonsoku family. Component of the MMS22L-TONSL complex, a complex at least composed of MMS22L and TONSL/NFKBIL2. Interacts with the MCM complex, the FACT complex and the RPA complex. Interacts with MCM5; the interaction is direct. Binds histones, with a strong preference for histone H3.1 (histones H3.1 and H3-4/H3.1t). Interacts (via ANK repeats) with histone H4; specifically binds histone H4 lacking methylation at 'Lys-20' (H4K20me0). May interact with DNAJC9; the interaction seems to be histone-dependent.

Its subcellular location is the nucleus. The protein resides in the chromosome. It localises to the cytoplasm. In terms of biological role, component of the MMS22L-TONSL complex, a complex that promotes homologous recombination-mediated repair of double-strand breaks (DSBs) at stalled or collapsed replication forks. The MMS22L-TONSL complex is required to maintain genome integrity during DNA replication. It mediates the assembly of RAD51 filaments on single-stranded DNA (ssDNA): the MMS22L-TONSL complex is recruited to DSBs following histone replacement by histone chaperones and eviction of the replication protein A complex (RPA/RP-A) from DSBs. Following recruitment to DSBs, the TONSL-MMS22L complex promotes recruitment of RAD51 filaments and subsequent homologous recombination. Within the complex, TONSL acts as a histone reader, which recognizes and binds newly synthesized histones following their replacement by histone chaperones. Specifically binds histone H4 lacking methylation at 'Lys-20' (H4K20me0) and histone H3.1. This Rattus norvegicus (Rat) protein is Tonsoku-like protein.